Here is a 375-residue protein sequence, read N- to C-terminus: 23S rRNA (uracil(747)-C(5))-methyltransferase RlmC (375 aa).

Positions 3, 11, 14, and 87 each coordinate [4Fe-4S] cluster. The S-adenosyl-L-methionine site is built by Gln212, Phe241, Glu262, and Asn307. The active-site Nucleophile is the Cys334.

Belongs to the class I-like SAM-binding methyltransferase superfamily. RNA M5U methyltransferase family. RlmC subfamily.

It carries out the reaction uridine(747) in 23S rRNA + S-adenosyl-L-methionine = 5-methyluridine(747) in 23S rRNA + S-adenosyl-L-homocysteine + H(+). In terms of biological role, catalyzes the formation of 5-methyl-uridine at position 747 (m5U747) in 23S rRNA. The protein is 23S rRNA (uracil(747)-C(5))-methyltransferase RlmC of Escherichia coli O127:H6 (strain E2348/69 / EPEC).